We begin with the raw amino-acid sequence, 891 residues long: MSGVNEIRSTFLDYFRDAGHAVVPSSSLVPKNDPTLMFTNAGMVQFKNVFTGVEKRPYVKATSSQKCVRAGGKHNDLDNVGYTARHHTFFEMLGNFSFGDYFKADAIELAWTLITKEFGLTPERLLVTVYADDDEAAGLWKKIAGFGDDKIIRIGTSDNFWQMGDTGPCGPCSEIFIDQGPALAGGPPGSPDEDGDRFLEFWNLVFMQYEQVEPGVRNPLPRPSIDTGMGLERMAAILQGVHSNYDTDLFRALIDAVAHAVSRAPEPATRASYRVIADHLRSTSFLIADGVLPSNEGRGYVLRRIMRRAMRHLELLGARDPVMYRLVPTLVREMGRAFPELVRSEALISETLRLEEGRFRKTLERGLAILDAESRDLSAGQNLSGETAFTLYDTYGFPLDLTQDALKARGIGVDTQAFDAAMQRQKQAARAAWQGSGEAATETVWFGIKERTGATEFLGYETETAEAVVGALLREGGEVETLKAGDSGIVVVNQTPFYGESGGQVGDTGTISGPGLKARVTNTEKKLGDLFVHHVTVEEGTLSLGAAVELKVDHARRSAIRANHSATHLLHEALRQVLGDHVAQKGSLVAPERLRFDISHPKPIDEAELTRVEEIANAVLLQNAPVVTKLMAVDEAIESGARALFGEKYGDEVRVVSMGRPVDDEGWEVEGRLPNFSIELCGGTHVSQLGEIGQITVIGESAVGAGVRRIEAMTGTAARRHRATESRTLSQLAGLLKAPVADVPERLSTLIEERRRLEKELADARKKIAMGGASGGGDEAREVNGVRLMARVVEGVEMRDLKGLADEGKSRLGSGIVAIVGVSADGKAGLVVGVTEDLTGRYDAVGLVRAGAGHLGGKGGGGRRDMAQAGGPDGHGAEAALAAIAEALAAA.

His-564, His-568, Cys-681, and His-685 together coordinate Zn(2+).

It belongs to the class-II aminoacyl-tRNA synthetase family. It depends on Zn(2+) as a cofactor.

The protein localises to the cytoplasm. The catalysed reaction is tRNA(Ala) + L-alanine + ATP = L-alanyl-tRNA(Ala) + AMP + diphosphate. In terms of biological role, catalyzes the attachment of alanine to tRNA(Ala) in a two-step reaction: alanine is first activated by ATP to form Ala-AMP and then transferred to the acceptor end of tRNA(Ala). Also edits incorrectly charged Ser-tRNA(Ala) and Gly-tRNA(Ala) via its editing domain. This Methylorubrum populi (strain ATCC BAA-705 / NCIMB 13946 / BJ001) (Methylobacterium populi) protein is Alanine--tRNA ligase.